A 71-amino-acid chain; its full sequence is Small integral membrane protein 31 (71 aa).

The helical transmembrane segment at 8–28 (LEMAFILLAFVIFSLFTLASI) threads the bilayer. Residues 31–71 (TPDDSNEEEEHEKKGREKKRKKSEKKKNCSEEEHRIEAVEL) are disordered. The segment covering 46 to 55 (REKKRKKSEK) has biased composition (basic residues). Residues 56-71 (KKNCSEEEHRIEAVEL) are compositionally biased toward basic and acidic residues. N-linked (GlcNAc...) asparagine glycosylation is present at asparagine 58.

The protein localises to the membrane. The polypeptide is Small integral membrane protein 31 (Homo sapiens (Human)).